A 453-amino-acid chain; its full sequence is Serine--tRNA ligase (453 aa).

252–254 (TAE) provides a ligand contact to L-serine. Residues 283 to 285 (RKE) and V299 contribute to the ATP site. E306 serves as a coordination point for L-serine. 370 to 373 (EMVS) provides a ligand contact to ATP. L-serine is bound at residue T405.

Belongs to the class-II aminoacyl-tRNA synthetase family. Type-1 seryl-tRNA synthetase subfamily. In terms of assembly, homodimer. The tRNA molecule binds across the dimer.

The protein localises to the cytoplasm. It carries out the reaction tRNA(Ser) + L-serine + ATP = L-seryl-tRNA(Ser) + AMP + diphosphate + H(+). The catalysed reaction is tRNA(Sec) + L-serine + ATP = L-seryl-tRNA(Sec) + AMP + diphosphate + H(+). The protein operates within aminoacyl-tRNA biosynthesis; selenocysteinyl-tRNA(Sec) biosynthesis; L-seryl-tRNA(Sec) from L-serine and tRNA(Sec): step 1/1. In terms of biological role, catalyzes the attachment of serine to tRNA(Ser). Is also able to aminoacylate tRNA(Sec) with serine, to form the misacylated tRNA L-seryl-tRNA(Sec), which will be further converted into selenocysteinyl-tRNA(Sec). The protein is Serine--tRNA ligase of Sulfurisphaera tokodaii (strain DSM 16993 / JCM 10545 / NBRC 100140 / 7) (Sulfolobus tokodaii).